The following is a 745-amino-acid chain: MTKVSSLGYPRLGENREWKKLIEAYWAGKVSKNDLFAGAKELRLDFLKKQLNAGLDLIPVGDFSLYDHILDLSVQFNIIPKRFAKEPIDIDLYFAIARGNKENVASSMKKWFNTNYHYIVPEWSKQRPKLNNNRLLDLYLEAREVVGDKAKPVITGPITYVALSTGVEDFTAAVKSLLPLYKQVFTELVKAGASYIQVDEPIFVTDEGKDYLQAAKAVYAYFAKEVPDAKFIFQTYFEGLIDSQVLSQLPVDAFGLDFVYGLEENLEAIKTGAFKGKEIFAGVIDGRNIWSSDFVKTSALLETIEEQSAALTIQPSCSLLHVPVTTKNETDLDPVLRNGLAFADEKLTEVKRLAEHLDGREDPAYDLHIAHFDALQAADFRNVKLEDLSRVATKRPSDFAKRRDIQQEKLHLPLLPTTTIGSFPQSREIRRTRLAWKRGDISDAEYKQFIQAEIERWIRIQEDLDLDVLVHGEFERVDMVEFFGQKLAGFTTTKFGWVQSYGSRAVKPPIIYGDVQHLEPITVEETVYAQSLTDRPVKGMLTGPITITNWSFERTDIPRDQLFNQIGLAIKDEIKLLENAGIAIIQVDEAALREGLPLRKSKQKAYLDDAVHAFHIATSSVKDETQIHTHMCYSKFDEIIDAIRALDADVISIETSRSHGDIIESFETAVYPLGIGLGVYDIHSPRVPTKEEVVANIERPLRQLSPTQFWVNPDCGLKTRQEPETIAALKVLVAATKEVRQKLGN.

Residues K19 and N115 each contribute to the 5-methyltetrahydropteroyltri-L-glutamate site. Residues 420–422 and E473 contribute to the L-homocysteine site; that span reads IGS. L-methionine is bound by residues 420 to 422 and E473; that span reads IGS. Residues D478, Y501, 504–505, and W550 contribute to the 5-methyltetrahydropteroyltri-L-glutamate site; that span reads RA. D588 contacts L-homocysteine. D588 provides a ligand contact to L-methionine. Zn(2+) is bound by residues H630, C632, and E654. Residue H683 is the Proton donor of the active site. A Zn(2+)-binding site is contributed by C715.

This sequence belongs to the vitamin-B12 independent methionine synthase family. Zn(2+) serves as cofactor.

It carries out the reaction 5-methyltetrahydropteroyltri-L-glutamate + L-homocysteine = tetrahydropteroyltri-L-glutamate + L-methionine. It functions in the pathway amino-acid biosynthesis; L-methionine biosynthesis via de novo pathway; L-methionine from L-homocysteine (MetE route): step 1/1. Functionally, catalyzes the transfer of a methyl group from 5-methyltetrahydrofolate to homocysteine resulting in methionine formation. This Streptococcus mutans serotype c (strain ATCC 700610 / UA159) protein is 5-methyltetrahydropteroyltriglutamate--homocysteine methyltransferase.